The primary structure comprises 37 residues: Large ribosomal subunit protein bL36 (37 aa).

It belongs to the bacterial ribosomal protein bL36 family.

The chain is Large ribosomal subunit protein bL36 from Marinobacter nauticus (strain ATCC 700491 / DSM 11845 / VT8) (Marinobacter aquaeolei).